An 84-amino-acid chain; its full sequence is Beta-defensin 119 (84 aa).

Positions Met-1–Gly-21 are cleaved as a signal peptide. Cystine bridges form between Cys-28–Cys-55, Cys-35–Cys-49, and Cys-39–Cys-56.

Belongs to the beta-defensin family.

Its subcellular location is the secreted. In terms of biological role, has antibacterial activity. The polypeptide is Beta-defensin 119 (DEFB119) (Gorilla gorilla gorilla (Western lowland gorilla)).